We begin with the raw amino-acid sequence, 326 residues long: MKNIAIIGASGYTGAQLTALIHAEADLTIQGLYVSENSLDKGKPLADLYPSYSHIALTLSPLSDDAKAKIVAEADAVVLATEHSVSLHLAAWFYSQGLAVFDLSGAYRFSDVAQYPKWYGFEHEYPEVLAKAVYGLAEWNAKEIAATKMIAVPGCYPTASLTALKPLASLLTSAYPVINAVSGVTGAGRKAQLHTSFCEVSLTPYGVLGHRHQPEIVTQLGQEVIFTPHLGNFKRGILATITVQLKPGTTTADVAAAYSVYDQAPLVTVKHNQFPKVDDVVLTPNCHLGWKFDENSGYLVVASAIDNLMKGAASQALQCIKIHFNL.

The active site involves Cys-155.

The protein belongs to the NAGSA dehydrogenase family. Type 1 subfamily.

Its subcellular location is the cytoplasm. It carries out the reaction N-acetyl-L-glutamate 5-semialdehyde + phosphate + NADP(+) = N-acetyl-L-glutamyl 5-phosphate + NADPH + H(+). Its pathway is amino-acid biosynthesis; L-arginine biosynthesis; N(2)-acetyl-L-ornithine from L-glutamate: step 3/4. In terms of biological role, catalyzes the NADPH-dependent reduction of N-acetyl-5-glutamyl phosphate to yield N-acetyl-L-glutamate 5-semialdehyde. In Shewanella baltica (strain OS223), this protein is N-acetyl-gamma-glutamyl-phosphate reductase.